The following is a 189-amino-acid chain: Elongation factor P (189 aa).

This sequence belongs to the elongation factor P family.

It localises to the cytoplasm. The protein operates within protein biosynthesis; polypeptide chain elongation. In terms of biological role, involved in peptide bond synthesis. Stimulates efficient translation and peptide-bond synthesis on native or reconstituted 70S ribosomes in vitro. Probably functions indirectly by altering the affinity of the ribosome for aminoacyl-tRNA, thus increasing their reactivity as acceptors for peptidyl transferase. The chain is Elongation factor P from Campylobacter jejuni subsp. doylei (strain ATCC BAA-1458 / RM4099 / 269.97).